A 270-amino-acid chain; its full sequence is Phosphonoacetaldehyde hydrolase (270 aa).

Aspartate 11 acts as the Nucleophile in catalysis. Mg(2+) is bound by residues aspartate 11 and alanine 13. The active-site Schiff-base intermediate with substrate is the lysine 53. Mg(2+) is bound at residue aspartate 187.

The protein belongs to the HAD-like hydrolase superfamily. PhnX family. As to quaternary structure, homodimer. Mg(2+) is required as a cofactor.

The catalysed reaction is phosphonoacetaldehyde + H2O = acetaldehyde + phosphate + H(+). Involved in phosphonate degradation. The chain is Phosphonoacetaldehyde hydrolase from Salmonella enteritidis PT4 (strain P125109).